A 207-amino-acid polypeptide reads, in one-letter code: Small heat shock protein hspG7 (207 aa).

Positions 30 to 207 (KTIIDILPPM…YSNTIKININ (178 aa)) constitute a sHSP domain. Composition is skewed to low complexity over residues 84–101 (QQQQ…SSST) and 122–135 (STTS…ATTT). The tract at residues 84–149 (QQQQLVIEKS…EDENKTKSSD (66 aa)) is disordered. Residues 136–149 (KENKEDENKTKSSD) show a composition bias toward basic and acidic residues.

This sequence belongs to the small heat shock protein (HSP20) family.

This chain is Small heat shock protein hspG7 (hspG7), found in Dictyostelium discoideum (Social amoeba).